A 343-amino-acid polypeptide reads, in one-letter code: MAEYDHYEDDEFFNSFNDSSQKEHQDFLQFSKVFLPCMYLVVFVCGLVGNSLVLVISIFYHKLQSLTDVFLVNLPLADLVFVCTLPFWAYAGIHEWIFGQVMCKTLLGVYTINFYTSMLILTCITVDRFIVVVKATKAYNQQAKRMTWGKVICLLIWVISLLVSLPQIIYGNVFNLDKLICRYHDEEISTVVLATQMTLGFFLPLLTMIVCYSVIIKTLLHAGGFQKHRSLKIIFLVMAVFLLTQTPFNLVKLIRSTHWEYYAMTSFHYTIIVTEAIAYLRACLNPVLYAFVSLKFRKNFWKLVKDIGCLPYLGVSHQWKSSEDNSKTFSASHNVEATSMFQL.

At Met-1–Val-33 the chain is on the extracellular side. An N-linked (GlcNAc...) asparagine glycan is attached at Asn-17. The helical transmembrane segment at Phe-34–Tyr-60 threads the bilayer. At His-61–Val-69 the chain is on the cytoplasmic side. A helical transmembrane segment spans residues Phe-70–Tyr-90. Over Ala-91–Lys-104 the chain is Extracellular. Cysteines 103 and 181 form a disulfide. Residues Thr-105–Val-126 form a helical membrane-spanning segment. The Cytoplasmic portion of the chain corresponds to Asp-127–Lys-144. The chain crosses the membrane as a helical span at residues Arg-145–Leu-165. The Extracellular segment spans residues Pro-166–Ile-188. A helical membrane pass occupies residues Ser-189–Ile-216. Topologically, residues Lys-217 to Lys-232 are cytoplasmic. A helical membrane pass occupies residues Ile-233 to Glu-260. Topologically, residues Tyr-261–Ala-276 are extracellular. A helical membrane pass occupies residues Ile-277–Leu-294. Topologically, residues Lys-295–Leu-343 are cytoplasmic.

This sequence belongs to the G-protein coupled receptor 1 family.

It localises to the cell membrane. Its function is as follows. Receptor for the C-X-C chemokine CXCL16. Used as a coreceptor by SIVs and by strains of HIV-2 and m-tropic HIV-1. This chain is C-X-C chemokine receptor type 6 (CXCR6), found in Cercocebus atys (Sooty mangabey).